The following is a 668-amino-acid chain: NADH-ubiquinone oxidoreductase chain 5 (668 aa).

18 helical membrane passes run 1-21 (MYIINLILPLIGSIITGLFGH), 31-51 (IAVGCMMLTALSSLYIGYEIL), 81-101 (LTSIMIIVITCISSMVHLYSM), 111-131 (TRFFSYLSLFTFFMMLLVTAD), 133-153 (FVQLFFGWEGVGIMSYLLINF), 178-198 (LFFGILLVFLVFKSVDFSVIF), 211-231 (LLGYEVNAITLIGSFIVIGVV), 251-271 (TPVSALLHAATMVTAGVFLVL), 283-303 (ILNILTIIGALTTLFATTIGI), 311-331 (VIAYSTCSQLGYMIFACGLLN), 339-359 (LTTHAFFKALLFLSAGSVIHG), 375-395 (LMPLTYQCMLIGTLALTGFPF), 421-441 (AIIGYVAAFGTTFYSFRLLIL), 462-482 (TNMVIPLVILAICSIFIGYLT), 519-539 (LLPLFAFIYGVLTPVLFYFNL), 566-586 (FDFLSRVLIAVPFFHLSYDVM), 629-649 (IVQAILLIIFVGIFSFMIGFL), and 650-668 (YVELFVILGALYLCLPKIK).

This sequence belongs to the complex I subunit 5 family.

It localises to the mitochondrion inner membrane. It catalyses the reaction a ubiquinone + NADH + 5 H(+)(in) = a ubiquinol + NAD(+) + 4 H(+)(out). Its function is as follows. Core subunit of the mitochondrial membrane respiratory chain NADH dehydrogenase (Complex I) that is believed to belong to the minimal assembly required for catalysis. Complex I functions in the transfer of electrons from NADH to the respiratory chain. The immediate electron acceptor for the enzyme is believed to be ubiquinone. This is NADH-ubiquinone oxidoreductase chain 5 (nad5) from Dictyostelium citrinum (Slime mold).